A 176-amino-acid chain; its full sequence is Retinol-binding protein 4-A (176 aa).

An N-acetylserine modification is found at Ser-1. Cystine bridges form between Cys-3-Cys-159, Cys-69-Cys-173, and Cys-119-Cys-128. Position 97 (Gln-97) interacts with substrate.

Belongs to the calycin superfamily. Lipocalin family.

It localises to the secreted. Its function is as follows. RBP delivers retinol from the liver stores to the peripheral tissues. In plasma, the RBP-retinol complex interacts with transthyretin, this prevents its loss by filtration through the kidney glomeruli. In Oncorhynchus mykiss (Rainbow trout), this protein is Retinol-binding protein 4-A (rbp4a).